A 208-amino-acid polypeptide reads, in one-letter code: Protein late bloomer (208 aa).

4 helical membrane-spanning segments follow: residues 10-30 (IASI…IGWI), 41-61 (FVIA…LGIF), 67-87 (SVVL…LQIV), and 174-194 (FIIV…LAVF).

The protein belongs to the tetraspanin (TM4SF) family. Transiently expressed on motor axons, growth cones and terminal arbors.

It is found in the membrane. It localises to the synapse. Facilitates synapse formation. This Drosophila melanogaster (Fruit fly) protein is Protein late bloomer (lbm).